The sequence spans 89 residues: Small ribosomal subunit protein uS15 (89 aa).

Belongs to the universal ribosomal protein uS15 family. As to quaternary structure, part of the 30S ribosomal subunit. Forms a bridge to the 50S subunit in the 70S ribosome, contacting the 23S rRNA.

One of the primary rRNA binding proteins, it binds directly to 16S rRNA where it helps nucleate assembly of the platform of the 30S subunit by binding and bridging several RNA helices of the 16S rRNA. Functionally, forms an intersubunit bridge (bridge B4) with the 23S rRNA of the 50S subunit in the ribosome. This Bartonella henselae (strain ATCC 49882 / DSM 28221 / CCUG 30454 / Houston 1) (Rochalimaea henselae) protein is Small ribosomal subunit protein uS15.